Here is a 626-residue protein sequence, read N- to C-terminus: Zinc finger protein 471 (626 aa).

The 72-residue stretch at 14–85 (VTFKDVAIDF…TSEMTRSPFS (72 aa)) folds into the KRAB domain. C2H2-type zinc fingers lie at residues 206-228 (FKCN…FRIH), 234-256 (YACE…HRTH), 262-284 (FECK…QRIH), 290-312 (YKCK…QRIH), 318-340 (YECK…QRCH), 346-369 (YECI…RSYH), 375-397 (FNCI…RRIH), 403-425 (YKCG…QRIH), 431-453 (YECD…QRVH), 459-481 (YECK…LRIH), 487-509 (YECK…QRIH), 515-537 (YECI…QKTH), 543-565 (YECN…QRIH), 571-593 (YKCT…QRLH), and 599-621 (YQCF…QRSH).

It belongs to the krueppel C2H2-type zinc-finger protein family.

Its subcellular location is the nucleus. In terms of biological role, may be involved in transcriptional regulation. The chain is Zinc finger protein 471 (ZNF471) from Homo sapiens (Human).